Here is a 1036-residue protein sequence, read N- to C-terminus: Mediator of RNA polymerase II transcription subunit 24 (1036 aa).

It belongs to the Mediator complex subunit 24 family. In terms of assembly, component of the Mediator complex.

It is found in the nucleus. In terms of biological role, component of the Mediator complex, a coactivator involved in the regulated transcription of nearly all RNA polymerase II-dependent genes. Mediator functions as a bridge to convey information from gene-specific regulatory proteins to the basal RNA polymerase II transcription machinery. Mediator is recruited to promoters by direct interactions with regulatory proteins and serves as a scaffold for the assembly of a functional preinitiation complex with RNA polymerase II and the general transcription factors. This is Mediator of RNA polymerase II transcription subunit 24 (MED24) from Anopheles gambiae (African malaria mosquito).